We begin with the raw amino-acid sequence, 490 residues long: Phenylacetaldehyde synthase (490 aa).

L-phenylalanine contacts are provided by Pro-92, His-193, and His-308. N6-(pyridoxal phosphate)lysine is present on Lys-309. An L-phenylalanine-binding site is contributed by Phe-338.

Belongs to the group II decarboxylase family. In terms of assembly, homodimer. Pyridoxal 5'-phosphate serves as cofactor. In terms of tissue distribution, expressed in roots, rosette leaves, stems, cauline leaves and flowers.

The enzyme catalyses L-phenylalanine + O2 + H2O + H(+) = 2-phenylacetaldehyde + H2O2 + NH4(+) + CO2. The catalysed reaction is L-dopa + O2 + H2O + H(+) = 3,4-dihydroxyphenylacetaldehyde + H2O2 + NH4(+) + CO2. Functionally, bifunctional enzyme that catalyzes the decarboxylation of L-phenylalanine to 2-phenylethylamine, which is then oxidized to form 2-phenylacetaldehyde, a constituent of floral scent. 2-phenylacetaldehyde is a precursor of 2-phenylethanol, another constituent of floral scent. Catalyzes both the decarboxylation and deamination of L-dopa to 3,4-dihydroxylphenylacetaldehyde (DHPAA). The sequence is that of Phenylacetaldehyde synthase from Arabidopsis thaliana (Mouse-ear cress).